The following is a 361-amino-acid chain: Aminomethyltransferase (361 aa).

Belongs to the GcvT family. In terms of assembly, the glycine cleavage system is composed of four proteins: P, T, L and H.

It carries out the reaction N(6)-[(R)-S(8)-aminomethyldihydrolipoyl]-L-lysyl-[protein] + (6S)-5,6,7,8-tetrahydrofolate = N(6)-[(R)-dihydrolipoyl]-L-lysyl-[protein] + (6R)-5,10-methylene-5,6,7,8-tetrahydrofolate + NH4(+). In terms of biological role, the glycine cleavage system catalyzes the degradation of glycine. The polypeptide is Aminomethyltransferase (Phocaeicola vulgatus (strain ATCC 8482 / DSM 1447 / JCM 5826 / CCUG 4940 / NBRC 14291 / NCTC 11154) (Bacteroides vulgatus)).